The sequence spans 420 residues: Bone morphogenetic protein 2 (420 aa).

The first 23 residues, 1 to 23, serve as a signal peptide directing secretion; the sequence is MVAVVRSLMVLLLAQVLLEGATG. A propeptide spanning residues 24–303 is cleaved from the precursor; it reads LIPEVGRRRY…DSVLHTREKR (280 aa). N-linked (GlcNAc...) asparagine glycans are attached at residues Asn-138, Asn-167, Asn-168, Asn-172, and Asn-362. 3 disulfides stabilise this stretch: Cys-320–Cys-385, Cys-349–Cys-417, and Cys-353–Cys-419.

The protein belongs to the TGF-beta family. Homodimer; disulfide-linked.

The protein resides in the secreted. Induces cartilage and bone formation. The protein is Bone morphogenetic protein 2 (bmp2) of Tetraodon nigroviridis (Spotted green pufferfish).